The sequence spans 399 residues: Glycerol-1-phosphate dehydrogenase [NAD(P)+] (399 aa).

Residues Asp-56, Gly-118–Asp-122, and Thr-140–Ser-143 each bind NAD(+). A substrate-binding site is contributed by Asp-145. Ser-149 is a binding site for NAD(+). Asp-192 is a substrate binding site. Positions 192 and 272 each coordinate Ni(2+). A substrate-binding site is contributed by His-276. His-292 contacts Ni(2+).

It belongs to the glycerol-1-phosphate dehydrogenase family. In terms of assembly, homodimer. The cofactor is Ni(2+).

It is found in the cytoplasm. The enzyme catalyses sn-glycerol 1-phosphate + NAD(+) = dihydroxyacetone phosphate + NADH + H(+). The catalysed reaction is sn-glycerol 1-phosphate + NADP(+) = dihydroxyacetone phosphate + NADPH + H(+). Catalyzes the NAD(P)H-dependent reduction of dihydroxyacetonephosphate (DHAP or glycerone phosphate) to glycerol 1-phosphate (G1P). The G1P thus generated is probably used for the synthesis of phosphoglycerolipids in Gram-positive bacterial species. The sequence is that of Glycerol-1-phosphate dehydrogenase [NAD(P)+] from Halalkalibacterium halodurans (strain ATCC BAA-125 / DSM 18197 / FERM 7344 / JCM 9153 / C-125) (Bacillus halodurans).